Reading from the N-terminus, the 238-residue chain is Ribonuclease PH (238 aa).

Residues R86 and 124–126 contribute to the phosphate site; that span reads GTR.

It belongs to the RNase PH family. Homohexameric ring arranged as a trimer of dimers.

The catalysed reaction is tRNA(n+1) + phosphate = tRNA(n) + a ribonucleoside 5'-diphosphate. Its function is as follows. Phosphorolytic 3'-5' exoribonuclease that plays an important role in tRNA 3'-end maturation. Removes nucleotide residues following the 3'-CCA terminus of tRNAs; can also add nucleotides to the ends of RNA molecules by using nucleoside diphosphates as substrates, but this may not be physiologically important. Probably plays a role in initiation of 16S rRNA degradation (leading to ribosome degradation) during starvation. The sequence is that of Ribonuclease PH from Edwardsiella ictaluri (strain 93-146).